Reading from the N-terminus, the 404-residue chain is MTIIQTVTELGVTEDTIKVQMAPSGGKHLLADPGNHPAEHFESQMSWLRFQTRQYLTRFTDNQSDFVHSLQKKHRTPFRDVYFKYTSLMGSHMFYVIVLPMPVWLGYRDLTRDMIYVLGYSIYLSGYLKDYWCLPRPKSPPVDRITLSEYTTKEYGAPSSHSANATAVSLLFFWRICLSDTLVWPTKLLLLSLVIFYYLTLVFGRVYCGMHGMLDLFSGAAVGAICFFIRIWVVHALRNFQIGEHLWFPLLSVAWGLFILFNHVRPIDECPCFEDSVAFIGVVSGLDCSDWLTERYGWNLVCSRYASCGSKVFLRPLVGVASVIVWKDVISKTAVYTLLIKLLRFHDDRSEKVHFHNETSEEEECLLYSGVSKVEIVGRFLIYAGIPTTVFLLCPVFFTWTNLR.

At 1–86 (MTIIQTVTEL…PFRDVYFKYT (86 aa)) the chain is on the lumenal side. Residue N62 is glycosylated (N-linked (GlcNAc...) asparagine). The helical transmembrane segment at 87-107 (SLMGSHMFYVIVLPMPVWLGY) threads the bilayer. Topologically, residues 108 to 113 (RDLTRD) are cytoplasmic. A helical transmembrane segment spans residues 114 to 134 (MIYVLGYSIYLSGYLKDYWCL). The phosphatase sequence motif I stretch occupies residues 129-137 (KDYWCLPRP). Over 135-154 (PRPKSPPVDRITLSEYTTKE) the chain is Lumenal. A helical membrane pass occupies residues 155-176 (YGAPSSHSANATAVSLLFFWRI). A phosphatase sequence motif II region spans residues 158–161 (PSSH). The Proton donor role is filled by H161. At 177-182 (CLSDTL) the chain is on the cytoplasmic side. The chain crosses the membrane as a helical span at residues 183 to 203 (VWPTKLLLLSLVIFYYLTLVF). The Lumenal portion of the chain corresponds to 204 to 215 (GRVYCGMHGMLD). The phosphatase sequence motif III stretch occupies residues 204-215 (GRVYCGMHGMLD). The active-site Nucleophile is the H211. Residues 216 to 236 (LFSGAAVGAICFFIRIWVVHA) traverse the membrane as a helical segment. Topologically, residues 237–241 (LRNFQ) are cytoplasmic. The helical transmembrane segment at 242 to 262 (IGEHLWFPLLSVAWGLFILFN) threads the bilayer. At 263–319 (HVRPIDECPCFEDSVAFIGVVSGLDCSDWLTERYGWNLVCSRYASCGSKVFLRPLVG) the chain is on the lumenal side. Residues 320 to 340 (VASVIVWKDVISKTAVYTLLI) form a helical membrane-spanning segment. Over 341–379 (KLLRFHDDRSEKVHFHNETSEEEECLLYSGVSKVEIVGR) the chain is Cytoplasmic. The helical transmembrane segment at 380 to 400 (FLIYAGIPTTVFLLCPVFFTW) threads the bilayer. Residues 401–404 (TNLR) lie on the Lumenal side of the membrane.

This sequence belongs to the type 2 lipid phosphate phosphatase family.

It is found in the endoplasmic reticulum membrane. It catalyses the reaction sphinganine 1-phosphate + H2O = sphinganine + phosphate. In terms of biological role, dihydrosphingosine 1-phosphate phosphatase required for efficient ceramide synthesis from exogenous sphingoid bases. Involved in endocytosis and calcium-mediated signaling. The protein is Dihydrosphingosine 1-phosphate phosphatase YSR3 of Saccharomyces cerevisiae (strain ATCC 204508 / S288c) (Baker's yeast).